Here is a 229-residue protein sequence, read N- to C-terminus: Potassium/proton antiporter CemA (229 aa).

3 helical membrane passes run 7–27 (FTPL…SLLF), 107–127 (ILHF…SIFG), and 189–209 (IISG…KYWI).

Belongs to the CemA family.

The protein localises to the plastid. The protein resides in the chloroplast inner membrane. It carries out the reaction K(+)(in) + H(+)(out) = K(+)(out) + H(+)(in). Its function is as follows. Contributes to K(+)/H(+) antiport activity by supporting proton efflux to control proton extrusion and homeostasis in chloroplasts in a light-dependent manner to modulate photosynthesis. Prevents excessive induction of non-photochemical quenching (NPQ) under continuous-light conditions. Indirectly promotes efficient inorganic carbon uptake into chloroplasts. In Guizotia abyssinica (Niger), this protein is Potassium/proton antiporter CemA.